Here is a 333-residue protein sequence, read N- to C-terminus: MKNLRNRSFLTLLDFSRQEVEFLLTLSEDLKRAKYIGTEKPMLKNKNIALLFEKDSTRTRCAFEVAAHDQGANVTYLGPTGSQMGKKETTKDTARVLGGMYDGIEYRGFSQRTVETLAEYSGVPVWNGLTDEDHPTQVLADFLTAKEVLKKDYADINFTYVGDGRNNVANALMQGAAIMGMNFHLVCPKELNPTDELLNRCKNIAAENGGNILITDDIDQGVKGSDVIYTDVWVSMGEPDEVWKERLELLKPYQVNKEIMDKTGNPNVIFEHCLPSFHNADTKIGQQIFEKYGIREMEVTDEVFESKASVVFQEAENRMHTIKAVMVATLGEF.

Carbamoyl phosphate contacts are provided by residues 56–59, Gln-83, Arg-107, and 134–137; these read STRT and HPTQ. L-ornithine-binding positions include Asn-167, Asp-231, and 235–236; that span reads SM. Carbamoyl phosphate contacts are provided by residues 273–274 and Arg-318; that span reads CL.

This sequence belongs to the aspartate/ornithine carbamoyltransferase superfamily. OTCase family.

It localises to the cytoplasm. The enzyme catalyses carbamoyl phosphate + L-ornithine = L-citrulline + phosphate + H(+). Its pathway is amino-acid biosynthesis; L-arginine biosynthesis; L-arginine from L-ornithine and carbamoyl phosphate: step 1/3. Its function is as follows. Reversibly catalyzes the transfer of the carbamoyl group from carbamoyl phosphate (CP) to the N(epsilon) atom of ornithine (ORN) to produce L-citrulline. The chain is Ornithine carbamoyltransferase (argF) from Staphylococcus aureus (strain COL).